The sequence spans 691 residues: NADH-ubiquinone oxidoreductase 75 kDa subunit (691 aa).

Positions 1-78 constitute a 2Fe-2S ferredoxin-type domain; the sequence is MVNVFVDGLS…NMKIFTNTPL (78 aa). The [2Fe-2S] cluster site is built by C34, C45, C48, and C62. A 4Fe-4S His(Cys)3-ligated-type domain is found at 78 to 117; that stretch reads LVKKAREGVLEFLLVNHPLDCPICDQGGECDLQDLTMVYG. H94, C98, C101, C107, C146, C149, C152, and C196 together coordinate [4Fe-4S] cluster. Positions 215–271 constitute a 4Fe-4S Mo/W bis-MGD-type domain; the sequence is LQSTESIDVSDAIGSNIRIDVRGSEIMRILPRLNEDVNEEWISDKARFCYDGLKRQR.

It belongs to the complex I 75 kDa subunit family. As to quaternary structure, complex I is composed of about 30 different subunits. [2Fe-2S] cluster is required as a cofactor. The cofactor is [4Fe-4S] cluster.

It is found in the mitochondrion inner membrane. It carries out the reaction a ubiquinone + NADH + 5 H(+)(in) = a ubiquinol + NAD(+) + 4 H(+)(out). Core subunit of the mitochondrial membrane respiratory chain NADH dehydrogenase (Complex I) that is believed to belong to the minimal assembly required for catalysis. Complex I functions in the transfer of electrons from NADH to the respiratory chain. The immediate electron acceptor for the enzyme is believed to be ubiquinone. This is the largest subunit of complex I and it is a component of the iron-sulfur (IP) fragment of the enzyme. It may form part of the active site crevice where NADH is oxidized. The polypeptide is NADH-ubiquinone oxidoreductase 75 kDa subunit (NAD11) (Reclinomonas americana).